The primary structure comprises 353 residues: Photosystem II D2 protein (353 aa).

Residue Thr-2 is modified to N-acetylthreonine. At Thr-2 the chain carries Phosphothreonine. The helical transmembrane segment at 41–61 (CAYFALGGWFTGTTFVTSWYT) threads the bilayer. Position 118 (His-118) interacts with chlorophyll a. The helical transmembrane segment at 125 to 141 (GFMLRQFELARSVQLRP) threads the bilayer. The pheophytin a site is built by Gln-130 and Asn-143. The helical transmembrane segment at 153–166 (VFVSVFLIYPLGQS) threads the bilayer. His-198 is a binding site for chlorophyll a. A helical membrane pass occupies residues 208–228 (AALLCAIHGATVENTLFEDGD). Residues His-215 and Phe-262 each contribute to the a plastoquinone site. Residue His-215 participates in Fe cation binding. Residue His-269 coordinates Fe cation. The chain crosses the membrane as a helical span at residues 279-295 (GLWMSALGVVGLALNLR).

The protein belongs to the reaction center PufL/M/PsbA/D family. In terms of assembly, PSII is composed of 1 copy each of membrane proteins PsbA, PsbB, PsbC, PsbD, PsbE, PsbF, PsbH, PsbI, PsbJ, PsbK, PsbL, PsbM, PsbT, PsbX, PsbY, PsbZ, Psb30/Ycf12, at least 3 peripheral proteins of the oxygen-evolving complex and a large number of cofactors. It forms dimeric complexes. The D1/D2 heterodimer binds P680, chlorophylls that are the primary electron donor of PSII, and subsequent electron acceptors. It shares a non-heme iron and each subunit binds pheophytin, quinone, additional chlorophylls, carotenoids and lipids. There is also a Cl(-1) ion associated with D1 and D2, which is required for oxygen evolution. The PSII complex binds additional chlorophylls, carotenoids and specific lipids. serves as cofactor.

The protein localises to the plastid. The protein resides in the chloroplast thylakoid membrane. The enzyme catalyses 2 a plastoquinone + 4 hnu + 2 H2O = 2 a plastoquinol + O2. Its function is as follows. Photosystem II (PSII) is a light-driven water:plastoquinone oxidoreductase that uses light energy to abstract electrons from H(2)O, generating O(2) and a proton gradient subsequently used for ATP formation. It consists of a core antenna complex that captures photons, and an electron transfer chain that converts photonic excitation into a charge separation. The D1/D2 (PsbA/PsbD) reaction center heterodimer binds P680, the primary electron donor of PSII as well as several subsequent electron acceptors. D2 is needed for assembly of a stable PSII complex. The polypeptide is Photosystem II D2 protein (Lemna minor (Common duckweed)).